The primary structure comprises 1129 residues: Large proline-rich protein bag6 (1129 aa).

Positions 1-76 (MEVTVKTLDS…HLVERAPPQT (76 aa)) constitute a Ubiquitin-like domain. Disordered stretches follow at residues 69 to 108 (VERAPPQTQPSTGGPSTSSSTSPSSSNAANVPGAGAPERN), 187 to 235 (QPVN…SPSE), 347 to 402 (TGNG…HPHP), 490 to 518 (PAAPSFPPQPGVATTPPGPGGATTAVPGA), 550 to 606 (GSNT…QHLS), 654 to 692 (VPVSTSPPQSASQAPPPSSPSPPPAHSSPPPAAAPESLP), 942 to 967 (VPQAPEASSQDQPMETTPVDCQNGAA), and 987 to 1009 (VPTICTDSEHPTQEDTGSEQWAA). A compositionally biased stretch (low complexity) spans 73–105 (PPQTQPSTGGPSTSSSTSPSSSNAANVPGAGAP). 2 stretches are compositionally biased toward polar residues: residues 209–232 (RETLPQTTQNTDGQSNTAPTSHPS) and 364–383 (HTPTNTSEPQRSNSDNQPPS). Low complexity-rich tracts occupy residues 553–593 (TPSS…SSGP) and 655–666 (PVSTSPPQSASQ). Pro residues predominate over residues 667-686 (APPPSSPSPPPAHSSPPPAA). The span at 947 to 956 (EASSQDQPME) shows a compositional bias: polar residues.

In terms of assembly, component of the bag6/bat3 complex.

The protein localises to the cytoplasm. The protein resides in the cytosol. It localises to the nucleus. Its subcellular location is the secreted. It is found in the extracellular exosome. Functionally, ATP-independent molecular chaperone preventing the aggregation of misfolded and hydrophobic patches-containing proteins. Functions as part of a cytosolic protein quality control complex, the bag6/bat3 complex, which maintains these client proteins in a soluble state and participates in their proper delivery to the endoplasmic reticulum or alternatively can promote their sorting to the proteasome where they undergo degradation. The bag6/bat3 complex is involved in the post-translational delivery of tail-anchored/type II transmembrane proteins to the endoplasmic reticulum membrane. Similarly, the bag6/bat3 complex also functions as a sorting platform for proteins of the secretory pathway that are mislocalized to the cytosol either delivering them to the proteasome for degradation or to the endoplasmic reticulum. The bag6/bat3 complex also plays a role in the endoplasmic reticulum-associated degradation (ERAD), a quality control mechanism that eliminates unwanted proteins of the endoplasmic reticulum through their retrotranslocation to the cytosol and their targeting to the proteasome. It maintains these retrotranslocated proteins in an unfolded yet soluble state condition in the cytosol to ensure their proper delivery to the proteasome. Also required for selective ubiquitin-mediated degradation of defective nascent chain polypeptides by the proteasome. Also involved in endoplasmic reticulum stress-induced pre-emptive quality control, a mechanism that selectively attenuates the translocation of newly synthesized proteins into the endoplasmic reticulum and reroutes them to the cytosol for proteasomal degradation. May ensure the proper degradation of these proteins and thereby protects the endoplasmic reticulum from protein overload upon stress. By stabilizing a large spectrum of proteins, may indirectly affect different biological processes including apoptosis. By controlling the steady-state expression of the IGF1R receptor, indirectly regulates the insulin-like growth factor receptor signaling pathway. In terms of biological role, when nuclear, may also act as a component of some chromatin regulator complex. This is Large proline-rich protein bag6 from Xenopus tropicalis (Western clawed frog).